Reading from the N-terminus, the 151-residue chain is Putative coiled-coil-helix-coiled-coil-helix domain-containing protein CHCHD2P9, mitochondrial (151 aa).

Residues 1–9 (MPRGSRSRT) constitute a mitochondrion transit peptide. 2 disordered regions span residues 1-50 (MPRG…AAAP) and 75-110 (TQGHAVTGGFSGGSNAEPARPDIAYQEPQGTQPAQQ). Over residues 10–26 (SRMAPPASRAPQMRAAP) the composition is skewed to low complexity. The span at 27-38 (RPAPVAQPPAAA) shows a compositional bias: pro residues. Composition is skewed to low complexity over residues 39 to 50 (PPSAVGSSAAAP) and 100 to 110 (QEPQGTQPAQQ). Residues 111–151 (QQPCFYGIKQFLECAQNQGDIKLCEDFSKVLKQCRLAKGLA) form the CHCH domain. Short sequence motifs (cx9C motif) lie at residues 114–124 (CFYGIKQFLEC) and 134–144 (CEDFSKVLKQC). 2 disulfides stabilise this stretch: C114/C144 and C124/C134.

The protein resides in the mitochondrion. This chain is Putative coiled-coil-helix-coiled-coil-helix domain-containing protein CHCHD2P9, mitochondrial (CHCHD2P9), found in Homo sapiens (Human).